Consider the following 529-residue polypeptide: Bifunctional purine biosynthesis protein PurH (529 aa).

In terms of domain architecture, MGS-like spans 1–148 (MQQRRPVRRA…KNHKDVAIVV (148 aa)). Position 287 is an N6-acetyllysine (K287).

The protein belongs to the PurH family.

The enzyme catalyses (6R)-10-formyltetrahydrofolate + 5-amino-1-(5-phospho-beta-D-ribosyl)imidazole-4-carboxamide = 5-formamido-1-(5-phospho-D-ribosyl)imidazole-4-carboxamide + (6S)-5,6,7,8-tetrahydrofolate. The catalysed reaction is IMP + H2O = 5-formamido-1-(5-phospho-D-ribosyl)imidazole-4-carboxamide. Its pathway is purine metabolism; IMP biosynthesis via de novo pathway; 5-formamido-1-(5-phospho-D-ribosyl)imidazole-4-carboxamide from 5-amino-1-(5-phospho-D-ribosyl)imidazole-4-carboxamide (10-formyl THF route): step 1/1. It participates in purine metabolism; IMP biosynthesis via de novo pathway; IMP from 5-formamido-1-(5-phospho-D-ribosyl)imidazole-4-carboxamide: step 1/1. The protein is Bifunctional purine biosynthesis protein PurH of Shigella dysenteriae serotype 1 (strain Sd197).